The following is a 115-amino-acid chain: Large ribosomal subunit protein bL19 (115 aa).

The protein belongs to the bacterial ribosomal protein bL19 family.

In terms of biological role, this protein is located at the 30S-50S ribosomal subunit interface and may play a role in the structure and function of the aminoacyl-tRNA binding site. The chain is Large ribosomal subunit protein bL19 from Salmonella choleraesuis (strain SC-B67).